The chain runs to 559 residues: Dihydroxy-acid dehydratase 2 (559 aa).

A [2Fe-2S] cluster-binding site is contributed by Cys53. Asp85 is a Mg(2+) binding site. A [2Fe-2S] cluster-binding site is contributed by Cys126. Positions 127 and 128 each coordinate Mg(2+). At Lys128 the chain carries N6-carboxylysine. Cys195 provides a ligand contact to [2Fe-2S] cluster. Glu446 contributes to the Mg(2+) binding site. Ser472 serves as the catalytic Proton acceptor.

This sequence belongs to the IlvD/Edd family. In terms of assembly, homodimer. The cofactor is [2Fe-2S] cluster. Mg(2+) is required as a cofactor.

The catalysed reaction is (2R)-2,3-dihydroxy-3-methylbutanoate = 3-methyl-2-oxobutanoate + H2O. The enzyme catalyses (2R,3R)-2,3-dihydroxy-3-methylpentanoate = (S)-3-methyl-2-oxopentanoate + H2O. It participates in amino-acid biosynthesis; L-isoleucine biosynthesis; L-isoleucine from 2-oxobutanoate: step 3/4. The protein operates within amino-acid biosynthesis; L-valine biosynthesis; L-valine from pyruvate: step 3/4. Functions in the biosynthesis of branched-chain amino acids. Catalyzes the dehydration of (2R,3R)-2,3-dihydroxy-3-methylpentanoate (2,3-dihydroxy-3-methylvalerate) into 2-oxo-3-methylpentanoate (2-oxo-3-methylvalerate) and of (2R)-2,3-dihydroxy-3-methylbutanoate (2,3-dihydroxyisovalerate) into 2-oxo-3-methylbutanoate (2-oxoisovalerate), the penultimate precursor to L-isoleucine and L-valine, respectively. The chain is Dihydroxy-acid dehydratase 2 from Pseudoalteromonas translucida (strain TAC 125).